The following is a 474-amino-acid chain: ATP synthase subunit beta (474 aa).

155–162 (GGAGVGKT) provides a ligand contact to ATP.

It belongs to the ATPase alpha/beta chains family. As to quaternary structure, F-type ATPases have 2 components, CF(1) - the catalytic core - and CF(0) - the membrane proton channel. CF(1) has five subunits: alpha(3), beta(3), gamma(1), delta(1), epsilon(1). CF(0) has three main subunits: a(1), b(2) and c(9-12). The alpha and beta chains form an alternating ring which encloses part of the gamma chain. CF(1) is attached to CF(0) by a central stalk formed by the gamma and epsilon chains, while a peripheral stalk is formed by the delta and b chains.

The protein resides in the cell inner membrane. It catalyses the reaction ATP + H2O + 4 H(+)(in) = ADP + phosphate + 5 H(+)(out). Its function is as follows. Produces ATP from ADP in the presence of a proton gradient across the membrane. The catalytic sites are hosted primarily by the beta subunits. In Sorangium cellulosum (strain So ce56) (Polyangium cellulosum (strain So ce56)), this protein is ATP synthase subunit beta.